A 329-amino-acid chain; its full sequence is Cathepsin K (329 aa).

A signal peptide spans 1 to 15; that stretch reads MWGLKVLLLPVVSFA. A propeptide spans 16–114 (activation peptide); the sequence is LYPEEILDTH…TLYIPEWEGR (99 aa). An N-linked (GlcNAc...) asparagine glycan is attached at Asn-103. 3 cysteine pairs are disulfide-bonded: Cys-136–Cys-177, Cys-170–Cys-210, and Cys-269–Cys-318. The active site involves Cys-139. Active-site residues include His-276 and Asn-296.

It belongs to the peptidase C1 family. Predominantly expressed in osteoclasts (bones). Expressed in thyroid epithelial cells.

It localises to the lysosome. The protein localises to the secreted. Its subcellular location is the apical cell membrane. The enzyme catalyses Broad proteolytic activity. With small-molecule substrates and inhibitors, the major determinant of specificity is P2, which is preferably Leu, Met &gt; Phe, and not Arg.. Its function is as follows. Thiol protease involved in osteoclastic bone resorption and may participate partially in the disorder of bone remodeling. Displays potent endoprotease activity against fibrinogen at acid pH. May play an important role in extracellular matrix degradation. Involved in the release of thyroid hormone thyroxine (T4) by limited proteolysis of TG/thyroglobulin in the thyroid follicle lumen. This chain is Cathepsin K (CTSK), found in Homo sapiens (Human).